Here is a 93-residue protein sequence, read N- to C-terminus: uncharacterized protein (93 aa).

The helical transmembrane segment at 12–32 (VVGGLSFWTFSAGLIMIVNAL) threads the bilayer. The interval 47–66 (TANANGSDDDNENKNNSYRS) is disordered.

It is found in the cell membrane. This is an uncharacterized protein from Mycoplasma genitalium (strain ATCC 33530 / DSM 19775 / NCTC 10195 / G37) (Mycoplasmoides genitalium).